Reading from the N-terminus, the 344-residue chain is Uroporphyrinogen decarboxylase (344 aa).

Substrate contacts are provided by residues Arg23–Arg27, Asp73, Tyr149, Thr204, and His321.

This sequence belongs to the uroporphyrinogen decarboxylase family. As to quaternary structure, homodimer.

It is found in the cytoplasm. The catalysed reaction is uroporphyrinogen III + 4 H(+) = coproporphyrinogen III + 4 CO2. It participates in porphyrin-containing compound metabolism; protoporphyrin-IX biosynthesis; coproporphyrinogen-III from 5-aminolevulinate: step 4/4. Catalyzes the decarboxylation of four acetate groups of uroporphyrinogen-III to yield coproporphyrinogen-III. In Francisella tularensis subsp. mediasiatica (strain FSC147), this protein is Uroporphyrinogen decarboxylase.